Reading from the N-terminus, the 37-residue chain is Large ribosomal subunit protein bL36 (37 aa).

It belongs to the bacterial ribosomal protein bL36 family.

This chain is Large ribosomal subunit protein bL36, found in Shewanella woodyi (strain ATCC 51908 / MS32).